The primary structure comprises 146 residues: Single-stranded DNA-binding protein 1-A, mitochondrial (146 aa).

The transit peptide at 1-17 directs the protein to the mitochondrion; the sequence is MFHRPALQVFRQFARCQ. The SSB domain maps to 28–140; that stretch reads INKVQLLGRV…IIADNIIFLS (113 aa).

In terms of assembly, homotetramer.

The protein resides in the mitochondrion. It localises to the mitochondrion matrix. Its subcellular location is the mitochondrion nucleoid. In terms of biological role, binds preferentially and cooperatively to pyrimidine rich single-stranded DNA (ss-DNA). Required to maintain the copy number of mitochondrial DNA (mtDNA) and plays crucial roles during mtDNA replication that stimulate activity of the DNA polymerase at the replication fork. May also function in mtDNA repair. The chain is Single-stranded DNA-binding protein 1-A, mitochondrial (ssbp1-a) from Xenopus laevis (African clawed frog).